A 154-amino-acid chain; its full sequence is 17.7 kDa class I heat shock protein (154 aa).

The 115-residue stretch at 40 to 154 (ETSAFANTRI…PDVKSIEISG (115 aa)) folds into the sHSP domain.

It belongs to the small heat shock protein (HSP20) family. Forms oligomeric structures.

The protein resides in the cytoplasm. This chain is 17.7 kDa class I heat shock protein, found in Solanum peruvianum (Peruvian tomato).